Reading from the N-terminus, the 611-residue chain is Dihydroxy-acid dehydratase (611 aa).

Residue aspartate 81 participates in Mg(2+) binding. Cysteine 122 contributes to the [2Fe-2S] cluster binding site. Mg(2+) contacts are provided by aspartate 123 and lysine 124. Lysine 124 carries the N6-carboxylysine modification. Cysteine 195 serves as a coordination point for [2Fe-2S] cluster. Glutamate 491 is a binding site for Mg(2+). The Proton acceptor role is filled by serine 517.

The protein belongs to the IlvD/Edd family. In terms of assembly, homodimer. [2Fe-2S] cluster serves as cofactor. It depends on Mg(2+) as a cofactor.

The catalysed reaction is (2R)-2,3-dihydroxy-3-methylbutanoate = 3-methyl-2-oxobutanoate + H2O. It carries out the reaction (2R,3R)-2,3-dihydroxy-3-methylpentanoate = (S)-3-methyl-2-oxopentanoate + H2O. It participates in amino-acid biosynthesis; L-isoleucine biosynthesis; L-isoleucine from 2-oxobutanoate: step 3/4. It functions in the pathway amino-acid biosynthesis; L-valine biosynthesis; L-valine from pyruvate: step 3/4. In terms of biological role, functions in the biosynthesis of branched-chain amino acids. Catalyzes the dehydration of (2R,3R)-2,3-dihydroxy-3-methylpentanoate (2,3-dihydroxy-3-methylvalerate) into 2-oxo-3-methylpentanoate (2-oxo-3-methylvalerate) and of (2R)-2,3-dihydroxy-3-methylbutanoate (2,3-dihydroxyisovalerate) into 2-oxo-3-methylbutanoate (2-oxoisovalerate), the penultimate precursor to L-isoleucine and L-valine, respectively. This is Dihydroxy-acid dehydratase from Agrobacterium fabrum (strain C58 / ATCC 33970) (Agrobacterium tumefaciens (strain C58)).